The primary structure comprises 419 residues: Tol-Pal system protein TolB (419 aa).

Residues M1–A19 form the signal peptide.

Belongs to the TolB family. As to quaternary structure, the Tol-Pal system is composed of five core proteins: the inner membrane proteins TolA, TolQ and TolR, the periplasmic protein TolB and the outer membrane protein Pal. They form a network linking the inner and outer membranes and the peptidoglycan layer.

Its subcellular location is the periplasm. Part of the Tol-Pal system, which plays a role in outer membrane invagination during cell division and is important for maintaining outer membrane integrity. The protein is Tol-Pal system protein TolB of Legionella pneumophila (strain Paris).